The chain runs to 130 residues: RxLR effector protein PITG_14783 (130 aa).

The signal sequence occupies residues 1–20; the sequence is MRLPYVFAATMATLLVSSNA. Residues 27–58 are disordered; the sequence is AMLSSPNEQHQRQLRSHQTPVEDQEPDEERSL. Positions 38-56 match the RxLR-dEER motif; that stretch reads RQLRSHQTPVEDQEPDEER.

This sequence belongs to the RxLR effector family.

It is found in the secreted. It localises to the host nucleus. The protein localises to the host cytoplasm. In terms of biological role, effector that enhances P.infestans colonization of Nicotiana benthamiana leaves. This Phytophthora infestans (strain T30-4) (Potato late blight agent) protein is RxLR effector protein PITG_14783.